Here is a 125-residue protein sequence, read N- to C-terminus: Histone H2B (125 aa).

A disordered region spans residues Met1 to Lys32. O-linked (GlcNAc) serine glycosylation occurs at Ser112. Lys120 is covalently cross-linked (Glycyl lysine isopeptide (Lys-Gly) (interchain with G-Cter in ubiquitin)).

It belongs to the histone H2B family. The nucleosome is a histone octamer containing two molecules each of H2A, H2B, H3 and H4 assembled in one H3-H4 heterotetramer and two H2A-H2B heterodimers. The octamer wraps approximately 147 bp of DNA. Monoubiquitination of Lys-120 gives a specific tag for epigenetic transcriptional activation and is also prerequisite for histone H3 'Lys-4' and 'Lys-79' methylation. In terms of processing, glcNAcylation at Ser-112 promotes monoubiquitination of Lys-120. It fluctuates in response to extracellular glucose, and associates with transcribed genes.

It is found in the nucleus. It localises to the chromosome. In terms of biological role, core component of nucleosome. Nucleosomes wrap and compact DNA into chromatin, limiting DNA accessibility to the cellular machineries which require DNA as a template. Histones thereby play a central role in transcription regulation, DNA repair, DNA replication and chromosomal stability. DNA accessibility is regulated via a complex set of post-translational modifications of histones, also called histone code, and nucleosome remodeling. In Acropora formosa (Staghorn coral), this protein is Histone H2B.